A 296-amino-acid chain; its full sequence is Probable AP endonuclease (296 aa).

Cysteine 16 and cysteine 20 are disulfide-bonded. Zn(2+)-binding residues include histidine 78, histidine 115, glutamate 142, histidine 182, histidine 218, aspartate 231, histidine 233, and glutamate 271.

The protein belongs to the AP endonuclease 2 family. Zn(2+) serves as cofactor.

It is found in the host nucleus. It localises to the host cytoplasm. Its subcellular location is the virion. Endonuclease of the viral base excision repair system that catalyzes DNA cleavage reaction at the apurinic or apyrimidinic sites (AP sites). Cleaves phosphodiester bonds on the 5' side of AP sites. In addition to endonuclease activity, the AP endonuclease has a proofreading 3'-5' exonuclease activity that is considerably more efficient in the elimination of a mismatch than in that of a correctly paired base. Displays 3'-phosphatase and 3'-repair diesterase activities. The single nucleotide gaps generated by the AP endonuclease are filled by the viral repair DNA polymerase X and the DNA ligase. In Ornithodoros (relapsing fever ticks), this protein is Probable AP endonuclease.